The chain runs to 375 residues: Cell division protein ZapE (375 aa).

78 to 85 is a binding site for ATP; the sequence is GGVGRGKT.

This sequence belongs to the AFG1 ATPase family. ZapE subfamily. In terms of assembly, interacts with FtsZ.

The protein resides in the cytoplasm. Its function is as follows. Reduces the stability of FtsZ polymers in the presence of ATP. The protein is Cell division protein ZapE of Escherichia coli O157:H7.